The chain runs to 101 residues: Protein S100-A3 (101 aa).

EF-hand domains are found at residues 12-47 and 50-85; these read IVCTFQEYAGRCGDKYKICQSELKELLQKELPTWTP and FRECDYNKFMSVLDTNKDCEVDFGEYVRSLASLCLY. K26 is a Ca(2+) binding site. A disulfide bond links C30 and C68. At R51 the chain carries Citrulline; by PAD3. Ca(2+) contacts are provided by D63, N65, D67, E69, and E74. The Zn(2+) site is built by C83, C86, H87, and C93.

This sequence belongs to the S-100 family. In terms of assembly, homodimer and homotetramer for the citrullinated form. More than half of the arginine residues undergo citrullination by PAD1 and PAD2. Arg-51 is specifically citrullinated by PAD3 and promotes tetramerization. As to expression, skin specific, specifically expressed in cuticle of pelage follicle.

It localises to the cytoplasm. Its function is as follows. Binds both calcium and zinc. May be involved in calcium-dependent cuticle cell differentiation, hair shaft and hair cuticular barrier formation. The chain is Protein S100-A3 (S100a3) from Mus musculus (Mouse).